We begin with the raw amino-acid sequence, 535 residues long: RAN GTPase-activating protein 1 (535 aa).

The WPP stretch occupies residues 1–115 (MDHSAKTTQN…EESEVEVSKD (115 aa)). LRR repeat units lie at residues 208 to 231 (GSKL…AFAS), 236 to 259 (QHDL…AVRE), 264 to 287 (TDKI…AIAE), 320 to 343 (CSHL…ALAK), 353 to 376 (EIYM…LLKS), 377 to 400 (APSL…NLAA), 405 to 428 (KQSL…LIAK), 433 to 456 (HDQL…ALAQ), and 461 to 488 (KNTF…MFKD). The segment at 493–535 (LVPLDDNDPEGEDFEDEDEEEEGEDGNELESKLGSLKIKQGEE) is disordered. Residues 497–520 (DDNDPEGEDFEDEDEEEEGEDGNE) show a composition bias toward acidic residues.

It belongs to the RNA1 family. Homodimer. Interacts with WIP1 through its WPP domain. Component of Ran complexes at least composed of WIT1 or WIT2, RANGAP1 or RANGAP2, and WIP1 or WIP2 or WIP3. Interacts directly with WIT1, WIP2 and WIP3. Interacts with POK1.

The protein resides in the cytoplasm. It is found in the nucleus envelope. It localises to the nucleus membrane. The protein localises to the cytoskeleton. Its subcellular location is the spindle. The protein resides in the phragmoplast. Functionally, GTPase activator for the nuclear Ras-related regulatory protein Ran, converting it to the putatively inactive GDP-bound state. Plays a role in spatial signaling during cell division. The sequence is that of RAN GTPase-activating protein 1 (RANGAP1) from Arabidopsis thaliana (Mouse-ear cress).